Consider the following 199-residue polypeptide: Adenylate kinase (199 aa).

Residue 10–15 (GAGKGT) coordinates ATP. Positions 30-59 (STGDMLRAAVAARTPVGLQAKSIMESGGLV) are NMP. AMP contacts are provided by residues Thr31, Arg36, 57–59 (GLV), 85–88 (GFPR), and Gln92. The segment at 126–142 (KRAAETLARGEAVRKDD) is LID. An ATP-binding site is contributed by Arg127. Positions 139 and 150 each coordinate AMP. Ala178 lines the ATP pocket.

This sequence belongs to the adenylate kinase family. As to quaternary structure, monomer.

Its subcellular location is the cytoplasm. The catalysed reaction is AMP + ATP = 2 ADP. It participates in purine metabolism; AMP biosynthesis via salvage pathway; AMP from ADP: step 1/1. Catalyzes the reversible transfer of the terminal phosphate group between ATP and AMP. Plays an important role in cellular energy homeostasis and in adenine nucleotide metabolism. In Methylobacterium nodulans (strain LMG 21967 / CNCM I-2342 / ORS 2060), this protein is Adenylate kinase.